The primary structure comprises 83 residues: RNA-binding protein Hfq (83 aa).

A Sm domain is found at 10 to 70 (DAFLNQVRKE…ISTVSPLKPV (61 aa)).

This sequence belongs to the Hfq family. Homohexamer.

RNA chaperone that binds small regulatory RNA (sRNAs) and mRNAs to facilitate mRNA translational regulation in response to envelope stress, environmental stress and changes in metabolite concentrations. Also binds with high specificity to tRNAs. This chain is RNA-binding protein Hfq, found in Pelotomaculum thermopropionicum (strain DSM 13744 / JCM 10971 / SI).